A 1641-amino-acid chain; its full sequence is Histone-lysine N-methyltransferase SETD1 (1641 aa).

A disordered region spans residues 1 to 23 (MQDVRNINLVNNSSNSHDSSLAN). A compositionally biased stretch (low complexity) spans 8-23 (NLVNNSSNSHDSSLAN). An RRM domain is found at 101–179 (VEVTIVNLND…KILDVFCDPF (79 aa)). Disordered regions lie at residues 236–384 (YTTQ…IDQR), 537–596 (APPF…SDEE), 831–915 (RIRK…SSSS), 930–949 (KART…NLNQ), 1119–1155 (QEKR…RKTA), and 1205–1226 (NSKG…SSQA). Residues 244–284 (IPNRSRDRNWNRDKERERDRHFKERSRHSSERSYDRDRGMR) show a composition bias toward basic and acidic residues. A compositionally biased stretch (basic residues) spans 291–300 (IRRRRTFYRR). Basic and acidic residues-rich tracts occupy residues 308–341 (EDSR…ESFR) and 349–384 (KGRD…IDQR). Low complexity predominate over residues 556-568 (EVFSDVNSDSNNS). Composition is skewed to basic and acidic residues over residues 569 to 579 (ENKKRSCEKNN) and 844 to 867 (NFLE…KEDS). The segment covering 904-915 (SASSFFSSSSSS) has biased composition (low complexity). Composition is skewed to basic and acidic residues over residues 930–939 (KARTSEEDSP) and 1119–1128 (QEKRIEKSLD). Positions 1091–1132 (SEEEKEYQERRKRNTEYMAQMEREFLEEQEKRIEKSLDKNLQ) form a coiled coil. 2 stretches are compositionally biased toward polar residues: residues 1129–1145 (KNLQ…NSPR) and 1205–1217 (NSKG…QSPV). Residues 1473 to 1478 (RSNQRR) carry the RxxxRR motif motif. Residues 1502 to 1619 (KQLKFAKSAI…INEEITYDYK (118 aa)) form the SET domain. Tyrosine 1618 lines the S-adenosyl-L-methionine pocket. The 17-residue stretch at 1625–1641 (EKIPCLCGAQGCRGTLN) folds into the Post-SET domain.

The protein belongs to the class V-like SAM-binding methyltransferase superfamily. In terms of assembly, component of the Set1C/COMPASS complex, composed at least of the catalytic subunit Set1, wds/WDR5, Wdr82, Rbbp5, ash2, Cfp1/CXXC1, hcf and Dpy-30L1.

The protein resides in the nucleus. Its subcellular location is the chromosome. The enzyme catalyses L-lysyl(4)-[histone H3] + 3 S-adenosyl-L-methionine = N(6),N(6),N(6)-trimethyl-L-lysyl(4)-[histone H3] + 3 S-adenosyl-L-homocysteine + 3 H(+). The catalysed reaction is N(6)-methyl-L-lysyl(4)-[histone H3] + S-adenosyl-L-methionine = N(6),N(6)-dimethyl-L-lysyl(4)-[histone H3] + S-adenosyl-L-homocysteine + H(+). It catalyses the reaction N(6),N(6)-dimethyl-L-lysyl(4)-[histone H3] + S-adenosyl-L-methionine = N(6),N(6),N(6)-trimethyl-L-lysyl(4)-[histone H3] + S-adenosyl-L-homocysteine + H(+). Functionally, catalytic component of the COMPASS (Set1C) complex that specifically mono-, di- and trimethylates histone H3 to form H3K4me1/2/3. Binds RNAs which might negatively affect its histone methyltransferase activity. COMPASS recognizes ubiquitinated H2B on one face of the nucleosome which stimulates the methylation of H3 on the opposing face. Set1-dependent trimethylation regulates chromatin changes at active promoters that ensure optimal RNA polymerase II release into productive elongation, thereby contributing to optimal transcription. In Drosophila melanogaster (Fruit fly), this protein is Histone-lysine N-methyltransferase SETD1.